Reading from the N-terminus, the 842-residue chain is Glucans biosynthesis glucosyltransferase H (842 aa).

The next 8 membrane-spanning stretches (helical) occupy residues 140-160, 194-214, 513-533, 568-588, 600-620, 622-642, 656-676, and 680-700; these read ILLLLTLSQTVVATWYMKTIL, ILILFAVLFCWVSAGFWTALM, VFLTGVMSYLSAPLWFMFLAL, IALFASTMVLLFLPKLLSIIL, FIRVTLSLLLEVLFSVLLAPV, MLFHTVFVVSAFLGWEVVWNS, FMRHGSQLLLGLVWAVGMAWL, and FLFWLAPIVVSLILSPFVSAI.

The protein belongs to the glycosyltransferase 2 family. OpgH subfamily.

Its subcellular location is the cell inner membrane. Its pathway is glycan metabolism; osmoregulated periplasmic glucan (OPG) biosynthesis. Its function is as follows. Involved in the biosynthesis of osmoregulated periplasmic glucans (OPGs). This is Glucans biosynthesis glucosyltransferase H from Klebsiella pneumoniae (strain 342).